Here is a 166-residue protein sequence, read N- to C-terminus: 3-isopropylmalate dehydratase small subunit (166 aa).

The protein belongs to the LeuD family. LeuD type 2 subfamily. As to quaternary structure, heterodimer of LeuC and LeuD.

It carries out the reaction (2R,3S)-3-isopropylmalate = (2S)-2-isopropylmalate. It participates in amino-acid biosynthesis; L-leucine biosynthesis; L-leucine from 3-methyl-2-oxobutanoate: step 2/4. Functionally, catalyzes the isomerization between 2-isopropylmalate and 3-isopropylmalate, via the formation of 2-isopropylmaleate. This chain is 3-isopropylmalate dehydratase small subunit, found in Aliarcobacter butzleri (strain RM4018) (Arcobacter butzleri).